The chain runs to 138 residues: Putative nickel-responsive regulator (138 aa).

Ni(2+) contacts are provided by His-76, His-87, His-89, and Cys-95.

It belongs to the transcriptional regulatory CopG/NikR family. Ni(2+) serves as cofactor.

Its function is as follows. Transcriptional regulator. The protein is Putative nickel-responsive regulator of Pseudomonas putida (strain W619).